Here is a 392-residue protein sequence, read N- to C-terminus: Arogenate dehydratase/prephenate dehydratase 1, chloroplastic (392 aa).

A chloroplast-targeting transit peptide spans 1–48; the sequence is MALRCFPIWVCPQTTHHRSPLMGLAEFDADKRRRFCLWECSSSASQRA. One can recognise a Prephenate dehydratase domain in the interval 107–282; the sequence is RISFQGIPGA…NVTRFLILAR (176 aa). The region spanning 296–387 is the ACT domain; it reads SIVFSLEEGP…SFIRILGCYP (92 aa).

Expressed in roots, leaves, stems, flowers and siliques.

It localises to the plastid. It is found in the chloroplast stroma. It catalyses the reaction L-arogenate + H(+) = L-phenylalanine + CO2 + H2O. The catalysed reaction is prephenate + H(+) = 3-phenylpyruvate + CO2 + H2O. It participates in amino-acid biosynthesis; L-phenylalanine biosynthesis; L-phenylalanine from L-arogenate: step 1/1. Its pathway is amino-acid biosynthesis; L-phenylalanine biosynthesis; phenylpyruvate from prephenate: step 1/1. Its function is as follows. Converts the prephenate produced from the shikimate-chorismate pathway into phenylalanine. Dehydratase that uses arogenate and prephenate as substrates. Utilzes more efficiently arogenate than prephenate. The polypeptide is Arogenate dehydratase/prephenate dehydratase 1, chloroplastic (Arabidopsis thaliana (Mouse-ear cress)).